The sequence spans 187 residues: Adenine phosphoribosyltransferase (187 aa).

Belongs to the purine/pyrimidine phosphoribosyltransferase family. As to quaternary structure, homodimer.

It is found in the cytoplasm. The enzyme catalyses AMP + diphosphate = 5-phospho-alpha-D-ribose 1-diphosphate + adenine. It functions in the pathway purine metabolism; AMP biosynthesis via salvage pathway; AMP from adenine: step 1/1. Catalyzes a salvage reaction resulting in the formation of AMP, that is energically less costly than de novo synthesis. This chain is Adenine phosphoribosyltransferase, found in Yersinia pseudotuberculosis serotype I (strain IP32953).